A 135-amino-acid chain; its full sequence is UPF0329 protein ECU07_1860/ECU10_0040/ECU11_2100 (135 aa).

This sequence belongs to the UPF0329 family.

This Encephalitozoon cuniculi (strain GB-M1) (Microsporidian parasite) protein is UPF0329 protein ECU07_1860/ECU10_0040/ECU11_2100.